A 282-amino-acid polypeptide reads, in one-letter code: uncharacterized protein (282 aa).

Residues 1 to 77 form the HTH rpiR-type domain; it reads MNGLLRIRQR…LALSEALASQ (77 aa). Positions 37–56 form a DNA-binding region, H-T-H motif; it reads SQQLANEAGVSQSSVVKFAQ. Positions 125–265 constitute an SIS domain; sequence CVTMLRSARR…FIALIQQDLE (141 aa).

This is an uncharacterized protein from Escherichia coli (strain K12).